A 275-amino-acid polypeptide reads, in one-letter code: Large ribosomal subunit protein uL2 (275 aa).

The disordered stretch occupies residues 224-251 (VMNPVDHPHGGGEGRSPIGRKAPVTPWG).

It belongs to the universal ribosomal protein uL2 family. In terms of assembly, part of the 50S ribosomal subunit. Forms a bridge to the 30S subunit in the 70S ribosome.

Functionally, one of the primary rRNA binding proteins. Required for association of the 30S and 50S subunits to form the 70S ribosome, for tRNA binding and peptide bond formation. It has been suggested to have peptidyltransferase activity; this is somewhat controversial. Makes several contacts with the 16S rRNA in the 70S ribosome. The polypeptide is Large ribosomal subunit protein uL2 (Heliobacterium modesticaldum (strain ATCC 51547 / Ice1)).